The chain runs to 164 residues: Protein-export protein SecB (164 aa).

This sequence belongs to the SecB family. As to quaternary structure, homotetramer, a dimer of dimers. One homotetramer interacts with 1 SecA dimer.

The protein resides in the cytoplasm. In terms of biological role, one of the proteins required for the normal export of preproteins out of the cell cytoplasm. It is a molecular chaperone that binds to a subset of precursor proteins, maintaining them in a translocation-competent state. It also specifically binds to its receptor SecA. This chain is Protein-export protein SecB, found in Rhodopseudomonas palustris (strain BisB18).